The primary structure comprises 383 residues: Izumo sperm-egg fusion protein 1 (383 aa).

Positions 1-21 are cleaved as a signal peptide; the sequence is MGLHFTLLLAALANCLCPARL. 5 cysteine pairs are disulfide-bonded: Cys-22-Cys-149, Cys-25-Cys-152, Cys-135-Cys-159, Cys-139-Cys-165, and Cys-182-Cys-233. Residues 22-306 are Extracellular-facing; that stretch reads CIICDPFVVA…HRPEKKLKSR (285 aa). An important for interaction with IZUMO1R region spans residues 148 to 160; sequence WCNKCEKQMHFCR. An Ig-like C2-type domain is found at 167 to 251; it reads ERQIEVHRLE…PATIIYYHVT (85 aa). N-linked (GlcNAc...) asparagine glycosylation occurs at Asn-204. The helical transmembrane segment at 307–327 threads the bilayer; the sequence is LLILLILGFVVLVASVIASVL. Topologically, residues 328 to 383 are cytoplasmic; sequence HFRKTRVKSKNSNVENKTSAAEFKSEAESPQKMGSRKLSQAEFHTDSSDKVEEADN. The interval 335–383 is disordered; it reads KSKNSNVENKTSAAEFKSEAESPQKMGSRKLSQAEFHTDSSDKVEEADN. Polar residues predominate over residues 337–346; sequence KNSNVENKTS. Phosphoserine occurs at positions 339, 346, and 366. Positions 370-383 are enriched in basic and acidic residues; that stretch reads FHTDSSDKVEEADN. Residue Thr-372 is modified to Phosphothreonine.

This sequence belongs to the Izumo family. As to quaternary structure, monomer, homodimer; disulfide-linked and homooligomer; depending on the context. Interacts with IZUMO1R/JUNO. IZUMO1 and IZUMO1R/JUNO form a complex with 1:1 stoichiometry. In gamete recognition, IZUMO1R/JUNO first binds to monomeric IZUMO1. The weak, but specific interaction with IZUMO1R/JUNO induces IZUMO1 homodimerization. The process follows a tight binding phase where IZUMO1 bends the entire structure towards the sperm membrane side through a thiol-disulfide exchange reaction. The molecule no longer binds to IZUMO1R/JUNO and instead binds to a putative second oocyte receptor. Interacts with ACE3. Part of a oolemmal binding multimeric complex (IZUMO1 complex) composed at least of IZUMO1 and GLIPR1L1; the complex assemblage is influenced by the maturation status of the male germ cell. Interacts with GLIPR1L1. Interacts with FREY; the interaction retains IZUMO1 at the endoplasmic reticulum membrane and coordinates IZUMO1 complex assembly. Interacts with WDR54. Forms a complex with SPACA6 and TMEM81 on spermatocyte cell membrane. In terms of processing, N-glycosylated. Glycosylation is not essential for fusion and for proper protein trafficking in sperm. Post-translationally, phosphorylated. The cytoplasmic C-terminus is phosphorylated and undergoes phosphorylation changes during epididymal transit. In terms of tissue distribution, expressed in sperm (at protein level).

The protein resides in the cell membrane. It localises to the cytoplasmic vesicle. Its subcellular location is the secretory vesicle. The protein localises to the acrosome membrane. In terms of biological role, essential sperm cell-surface protein required for fertilization by acting as a ligand for IZUMO1R/JUNO receptor on egg. The IZUMO1:IZUMO1R/JUNO interaction is a necessary adhesion event between sperm and egg that is required for fertilization but is not sufficient for cell fusion. The ligand-receptor interaction probably does not act as a membrane 'fusogen'. Plays a critical role in sperm-oolemma binding prior to plasma membrane fusion. Can mediate cell-cell fusion in cultured mammalian cells independently of its binding to IZUMO1R/JUNO. The polypeptide is Izumo sperm-egg fusion protein 1 (Rattus norvegicus (Rat)).